The primary structure comprises 491 residues: MAKKAILVITDGIGYSSGMEYNAFYNAQKPTYDKLFSNTPHSFIETHGLSVGLPEGQMGNSEVGHMSMGSGRVLYQDLVKISLSLSENRFRDNEAFRELLAKSSRLHLIGLMSDGGVHSHIDHFMGIADIAAKEGKEVFLHLITDGRDVSPTSAKKYLAQVEKHLGANIKIATVSGRFYSMDRDNRWERVQKGYEAIVKAEPKTTLNPSEYIDASYAKNETDEFIEPIAFDGYDGMSDNDSVLMINFRSDRMREITTAIGESNFSSFEKSDIKLHVATITEYDKNFSYPVLFKKDSPKNTLSEVISSAGLRQLHTAETEKYAHVTFFFNGGIDEPYENETRVLIPSPNVRTYDEKPQMSAKEVGEVVLKGMDEAYDFIVVNFANGDMVGHTGNLEAAKIAVNTVDSELGKILQKAKEMDYSVLITSDHGNCEEMRDDDGNILTNHTAGKVWCFVEAEGVSRVEDGGLNNIAPTILKLMGLEIPKEMDHSLV.

Mn(2+)-binding residues include aspartate 11 and serine 61. The Phosphoserine intermediate role is filled by serine 61. Residues histidine 118, 147–148 (RD), arginine 177, arginine 183, 248–251 (RSDR), and lysine 320 contribute to the substrate site. Mn(2+) contacts are provided by aspartate 386, histidine 390, aspartate 427, histidine 428, and histidine 445.

This sequence belongs to the BPG-independent phosphoglycerate mutase family. As to quaternary structure, monomer. Requires Mn(2+) as cofactor.

The catalysed reaction is (2R)-2-phosphoglycerate = (2R)-3-phosphoglycerate. It participates in carbohydrate degradation; glycolysis; pyruvate from D-glyceraldehyde 3-phosphate: step 3/5. In terms of biological role, catalyzes the interconversion of 2-phosphoglycerate and 3-phosphoglycerate. In Sulfurimonas denitrificans (strain ATCC 33889 / DSM 1251) (Thiomicrospira denitrificans (strain ATCC 33889 / DSM 1251)), this protein is 2,3-bisphosphoglycerate-independent phosphoglycerate mutase.